A 137-amino-acid chain; its full sequence is uncharacterized protein (137 aa).

A signal peptide spans 1–34 (MAALSRALGPLRTPAPPLWIGLFLVATGSQQSLA). Over residues 33 to 45 (LAQPLPGNTTEAT) the composition is skewed to polar residues. Disordered stretches follow at residues 33–54 (LAQP…ASGS) and 98–137 (VLSP…LGAS). A glycan (N-linked (GlcNAc...) asparagine) is linked at asparagine 40. Basic and acidic residues predominate over residues 121 to 137 (KLKEPQPQDHKPGLGAS).

The protein localises to the secreted. This is an uncharacterized protein from Homo sapiens (Human).